Reading from the N-terminus, the 164-residue chain is MTKLNELAPREGSTKNRMRVGRGPGSGKGKTAGRGVKGQKARTGVSIAGFEGGQMPLHMRMPKRGFNSRNRKDFAEVNLWRIEQAIAAGKLDAKAAIDAEALLKAGVIRRAKDGVKLLGKGELKSKLNLTVYSATASARAAVEKAGGKLTTTKPEAAQDASAEA.

2 disordered regions span residues 1-49 (MTKL…SIAG) and 143-164 (EKAG…SAEA). Residues 22-36 (RGPGSGKGKTAGRGV) are compositionally biased toward gly residues.

The protein belongs to the universal ribosomal protein uL15 family. Part of the 50S ribosomal subunit.

In terms of biological role, binds to the 23S rRNA. The protein is Large ribosomal subunit protein uL15 of Phenylobacterium zucineum (strain HLK1).